The sequence spans 667 residues: Probable potassium transport system protein Kup (667 aa).

A run of 12 helical transmembrane segments spans residues 16-36 (GFIIALGIVYGDIGTSPLYTM), 58-78 (VSLIIWTLTLVTTIKYVLIAL), 101-121 (WLIIPAMLGGATLLSDGALTP), 146-166 (TNVILTTLLILMVLFGLQRFG), 167-187 (TGVIGKLFGPVMLVWFSVLGI), 221-241 (IFILGSIFLATTGAEALYSDL), 253-273 (WPFVKVCIILSYCGQAAWILA), 294-314 (VYLVILATLAAIIASQALISG), 343-363 (LYIPVINWSLFAVTSCTVLYF), 373-393 (YGLAITITMLMTTILLAYYLI), 399-419 (PLLASLLMAFFAFIEFIFFLA), and 431-451 (VVVLALAIVFVMVIWHAGTVI).

Belongs to the HAK/KUP transporter (TC 2.A.72) family.

The protein localises to the cell membrane. The enzyme catalyses K(+)(in) + H(+)(in) = K(+)(out) + H(+)(out). In terms of biological role, transport of potassium into the cell. Likely operates as a K(+):H(+) symporter. This chain is Probable potassium transport system protein Kup, found in Streptococcus equi subsp. zooepidemicus (strain H70).